A 217-amino-acid chain; its full sequence is CLA biosynthesis enone reductase (217 aa).

Residues Arg20, Ser22, and Arg24 each contribute to the FMN site. Cys51 contacts 10-oxooctadecanoate. The FMN site is built by Asn78 and Gln81. Arg118 contributes to the 10-oxooctadecanoate binding site. The FMN site is built by Asn165, Ser168, Gly169, and Arg206.

The protein belongs to the nitroreductase family. As to quaternary structure, homodimer. FMN is required as a cofactor.

It catalyses the reaction 10-oxo-(11E)-octadecenoate + NADH + H(+) = 10-oxooctadecanoate + NAD(+). It participates in lipid metabolism; fatty acid metabolism. In terms of biological role, is involved in a saturation metabolic pathway of polyunsaturated fatty acids, that detoxifies unsaturated fatty acids and generates hydroxy fatty acids, oxo fatty acids, conjugated fatty acids such as conjugated linoleic acids (CLAs), and partially saturated trans-fatty acids as intermediates. CLA-ER catalyzes the saturation of the carbon-carbon double bond in 10-oxo-(11E)-octadecenoate to produce 10-oxooctadecanoate, during linoleate metabolism. As part of the gut microbiome, this enzyme modifies host fatty acid composition and is expected to improve human health by altering lipid metabolism related to the onset of metabolic syndrome. This is CLA biosynthesis enone reductase from Lactiplantibacillus plantarum (Lactobacillus plantarum).